A 204-amino-acid polypeptide reads, in one-letter code: ATP phosphoribosyltransferase (204 aa).

The protein belongs to the ATP phosphoribosyltransferase family. Short subfamily. In terms of assembly, heteromultimer composed of HisG and HisZ subunits.

It localises to the cytoplasm. It carries out the reaction 1-(5-phospho-beta-D-ribosyl)-ATP + diphosphate = 5-phospho-alpha-D-ribose 1-diphosphate + ATP. The protein operates within amino-acid biosynthesis; L-histidine biosynthesis; L-histidine from 5-phospho-alpha-D-ribose 1-diphosphate: step 1/9. Functionally, catalyzes the condensation of ATP and 5-phosphoribose 1-diphosphate to form N'-(5'-phosphoribosyl)-ATP (PR-ATP). Has a crucial role in the pathway because the rate of histidine biosynthesis seems to be controlled primarily by regulation of HisG enzymatic activity. The sequence is that of ATP phosphoribosyltransferase from Staphylococcus aureus (strain MRSA252).